We begin with the raw amino-acid sequence, 362 residues long: Methylthioribose-1-phosphate isomerase (362 aa).

Substrate-binding positions include arginine 53–alanine 55, arginine 90, and glutamine 201. Catalysis depends on aspartate 241, which acts as the Proton donor. Asparagine 251–lysine 252 is a binding site for substrate.

The protein belongs to the eIF-2B alpha/beta/delta subunits family. MtnA subfamily.

It catalyses the reaction 5-(methylsulfanyl)-alpha-D-ribose 1-phosphate = 5-(methylsulfanyl)-D-ribulose 1-phosphate. It participates in amino-acid biosynthesis; L-methionine biosynthesis via salvage pathway; L-methionine from S-methyl-5-thio-alpha-D-ribose 1-phosphate: step 1/6. Functionally, catalyzes the interconversion of methylthioribose-1-phosphate (MTR-1-P) into methylthioribulose-1-phosphate (MTRu-1-P). The sequence is that of Methylthioribose-1-phosphate isomerase from Dechloromonas aromatica (strain RCB).